We begin with the raw amino-acid sequence, 481 residues long: Proton-coupled amino acid transporter 2 (481 aa).

Residues Met1 to Gln56 are Cytoplasmic-facing. The interval Ser26–Thr49 is disordered. Over residues Lys29–Gly40 the composition is skewed to polar residues. A helical membrane pass occupies residues Thr57–Val77. The Extracellular portion of the chain corresponds to Lys78 to Asn79. Residues Ala80–Met100 form a helical membrane-spanning segment. Topologically, residues His101–His146 are cytoplasmic. Residues Ala147–Leu167 form a helical membrane-spanning segment. Topologically, residues Ala168–Pro195 are extracellular. The chain crosses the membrane as a helical span at residues Thr196–Ile216. The Cytoplasmic portion of the chain corresponds to Arg217 to Arg220. The chain crosses the membrane as a helical span at residues Val221–Gly241. The Extracellular segment spans residues Gln242–Thr262. Residues Tyr263 to Leu283 form a helical membrane-spanning segment. Topologically, residues Glu284–Thr295 are cytoplasmic. A helical membrane pass occupies residues Ile296–Tyr316. Residues Leu317–Leu343 lie on the Extracellular side of the membrane. A helical membrane pass occupies residues Tyr344–Ile364. The Cytoplasmic portion of the chain corresponds to Pro365–Leu377. A helical membrane pass occupies residues Pro378–Ile398. The Extracellular segment spans residues Pro399 to Asp402. The helical transmembrane segment at Leu403–Leu423 threads the bilayer. At Leu424–Leu444 the chain is on the cytoplasmic side. The chain crosses the membrane as a helical span at residues Ile445–Ile465. At Arg466–Gln481 the chain is on the extracellular side.

The protein belongs to the amino acid/polyamine transporter 2 family. As to expression, expressed in lung and spleen, and to a lower extent in brain, heart, kidney and skeletal muscle.

The protein localises to the cell membrane. The protein resides in the endoplasmic reticulum membrane. It localises to the recycling endosome membrane. It carries out the reaction glycine(in) + H(+)(in) = glycine(out) + H(+)(out). The catalysed reaction is L-alanine(in) + H(+)(in) = L-alanine(out) + H(+)(out). It catalyses the reaction D-alanine(in) + H(+)(in) = D-alanine(out) + H(+)(out). The enzyme catalyses L-proline(out) + H(+)(out) = L-proline(in) + H(+)(in). It carries out the reaction D-proline(out) + H(+)(out) = D-proline(in) + H(+)(in). The catalysed reaction is 4-hydroxy-L-proline(in) + H(+)(in) = 4-hydroxy-L-proline(out) + H(+)(out). It catalyses the reaction L-serine(in) + H(+)(in) = L-serine(out) + H(+)(out). The enzyme catalyses D-serine(out) + H(+)(out) = D-serine(in) + H(+)(in). It carries out the reaction beta-alanine(in) + H(+)(in) = beta-alanine(out) + H(+)(out). The catalysed reaction is 4-aminobutanoate(in) + H(+)(in) = 4-aminobutanoate(out) + H(+)(out). It catalyses the reaction sarcosine(in) + H(+)(in) = sarcosine(out) + H(+)(out). The enzyme catalyses N,N-dimethylglycine(in) + H(+)(in) = N,N-dimethylglycine(out) + H(+)(out). With respect to regulation, inhibited by L- and D-pipecolic acid, nipecotic acid, isonipecotic acid, L- and D-cycloserine, and L-2-azetidine-carboxylate. Functionally, electrogenic proton/amino acid symporter with a high selectivity for the small side chains amino acids glycine, alanine and proline, where both L- and D-enantiomers are transported. Extension of the backbone length, as in beta-alanine and 4-aminobutanoate or methylation of the amino group, as in sarcosine and N,N-dimethylglycine, are also tolerated but decrease transport efficiency. A free carboxyl group is preferred. This is Proton-coupled amino acid transporter 2 from Rattus norvegicus (Rat).